Consider the following 1376-residue polypeptide: DNA-directed RNA polymerase subunit beta (1376 aa).

Over residues 1357–1368 (NSKTGRQTNPGT) the composition is skewed to polar residues. Residues 1357–1376 (NSKTGRQTNPGTRENLPAAE) are disordered.

This sequence belongs to the RNA polymerase beta chain family. As to quaternary structure, the RNAP catalytic core consists of 2 alpha, 1 beta, 1 beta' and 1 omega subunit. When a sigma factor is associated with the core the holoenzyme is formed, which can initiate transcription.

The catalysed reaction is RNA(n) + a ribonucleoside 5'-triphosphate = RNA(n+1) + diphosphate. Its function is as follows. DNA-dependent RNA polymerase catalyzes the transcription of DNA into RNA using the four ribonucleoside triphosphates as substrates. This Azorhizobium caulinodans (strain ATCC 43989 / DSM 5975 / JCM 20966 / LMG 6465 / NBRC 14845 / NCIMB 13405 / ORS 571) protein is DNA-directed RNA polymerase subunit beta.